The following is a 445-amino-acid chain: N-succinylarginine dihydrolase (445 aa).

Substrate contacts are provided by residues 19-28, asparagine 110, and 137-138; these read AGLSFGNVAS and HR. The active site involves glutamate 174. Position 214 (arginine 214) interacts with substrate. The active site involves histidine 250. Substrate contacts are provided by aspartate 252 and asparagine 363. The Nucleophile role is filled by cysteine 369.

Belongs to the succinylarginine dihydrolase family. As to quaternary structure, homodimer.

It catalyses the reaction N(2)-succinyl-L-arginine + 2 H2O + 2 H(+) = N(2)-succinyl-L-ornithine + 2 NH4(+) + CO2. It participates in amino-acid degradation; L-arginine degradation via AST pathway; L-glutamate and succinate from L-arginine: step 2/5. Catalyzes the hydrolysis of N(2)-succinylarginine into N(2)-succinylornithine, ammonia and CO(2). The chain is N-succinylarginine dihydrolase from Shewanella sediminis (strain HAW-EB3).